Reading from the N-terminus, the 309-residue chain is Haloalkane dehalogenase (309 aa).

The region spanning 37-148 is the AB hydrolase-1 domain; sequence PTVLFLHGNP…FERWEDFHQR (112 aa). The active-site Nucleophile is the Asp110. Glu134 (proton donor) is an active-site residue. His278 serves as the catalytic Proton acceptor.

The protein belongs to the haloalkane dehalogenase family. Type 2 subfamily. In terms of assembly, monomer.

It carries out the reaction 1-haloalkane + H2O = a halide anion + a primary alcohol + H(+). Functionally, catalyzes hydrolytic cleavage of carbon-halogen bonds in halogenated aliphatic compounds, leading to the formation of the corresponding primary alcohols, halide ions and protons. The chain is Haloalkane dehalogenase from Mesorhizobium japonicum (strain LMG 29417 / CECT 9101 / MAFF 303099) (Mesorhizobium loti (strain MAFF 303099)).